The sequence spans 443 residues: uncharacterized protein (443 aa).

The next 4 membrane-spanning stretches (helical) occupy residues 15–35 (IYAGAGPAPMLAAAVAWDGLA), 38–58 (LGMAAASFSLLISGLTAGPGS), 59–79 (AWQGPAAAAMAAAAAPYLSWL), and 181–201 (VVTAAPAGAVGVPAALAIPAL). The tract at residues 231–270 (NFGIGNIGNANLGNGNIGNANLGSGNAGFFNFGNGNDGNT) is 4 X 10 AA approximate repeats.

Belongs to the mycobacterial PPE family.

Its subcellular location is the cell membrane. This is an uncharacterized protein from Mycobacterium tuberculosis (strain ATCC 25618 / H37Rv).